We begin with the raw amino-acid sequence, 494 residues long: Protein nucleotidyltransferase YdiU (494 aa).

The ATP site is built by Gly-90, Gly-92, Arg-93, Lys-113, Asp-125, Gly-126, Arg-176, and Arg-183. Asp-252 acts as the Proton acceptor in catalysis. Mg(2+) contacts are provided by Asn-253 and Asp-262. ATP is bound at residue Asp-262.

It belongs to the SELO family. Mg(2+) is required as a cofactor. It depends on Mn(2+) as a cofactor.

It catalyses the reaction L-seryl-[protein] + ATP = 3-O-(5'-adenylyl)-L-seryl-[protein] + diphosphate. The catalysed reaction is L-threonyl-[protein] + ATP = 3-O-(5'-adenylyl)-L-threonyl-[protein] + diphosphate. It carries out the reaction L-tyrosyl-[protein] + ATP = O-(5'-adenylyl)-L-tyrosyl-[protein] + diphosphate. The enzyme catalyses L-histidyl-[protein] + UTP = N(tele)-(5'-uridylyl)-L-histidyl-[protein] + diphosphate. It catalyses the reaction L-seryl-[protein] + UTP = O-(5'-uridylyl)-L-seryl-[protein] + diphosphate. The catalysed reaction is L-tyrosyl-[protein] + UTP = O-(5'-uridylyl)-L-tyrosyl-[protein] + diphosphate. Its function is as follows. Nucleotidyltransferase involved in the post-translational modification of proteins. It can catalyze the addition of adenosine monophosphate (AMP) or uridine monophosphate (UMP) to a protein, resulting in modifications known as AMPylation and UMPylation. The polypeptide is Protein nucleotidyltransferase YdiU (Alkalilimnicola ehrlichii (strain ATCC BAA-1101 / DSM 17681 / MLHE-1)).